The following is a 120-amino-acid chain: MFLLYEYDIFWAFLIISSAIPVLAFLISGVLSPIRKGPEKLSSYESGIEPIGDAWLQFRIRYYMFALVFVVFDVETVFLYPWAMSFDVLGVSAFLEAFIFVLILILGLVYAWRKGALEWS.

A run of 3 helical transmembrane segments spans residues 9 to 29 (IFWAFLIISSAIPVLAFLISG), 64 to 84 (MFALVFVVFDVETVFLYPWAM), and 88 to 108 (VLGVSAFLEAFIFVLILILGL).

It belongs to the complex I subunit 3 family. As to quaternary structure, NDH is composed of at least 16 different subunits, 5 of which are encoded in the nucleus.

Its subcellular location is the plastid. It localises to the chloroplast thylakoid membrane. The enzyme catalyses a plastoquinone + NADH + (n+1) H(+)(in) = a plastoquinol + NAD(+) + n H(+)(out). The catalysed reaction is a plastoquinone + NADPH + (n+1) H(+)(in) = a plastoquinol + NADP(+) + n H(+)(out). Its function is as follows. NDH shuttles electrons from NAD(P)H:plastoquinone, via FMN and iron-sulfur (Fe-S) centers, to quinones in the photosynthetic chain and possibly in a chloroplast respiratory chain. The immediate electron acceptor for the enzyme in this species is believed to be plastoquinone. Couples the redox reaction to proton translocation, and thus conserves the redox energy in a proton gradient. This Draba nemorosa (Woodland whitlowgrass) protein is NAD(P)H-quinone oxidoreductase subunit 3, chloroplastic.